Here is a 313-residue protein sequence, read N- to C-terminus: 4-hydroxy-3-methylbut-2-enyl diphosphate reductase (313 aa).

Cys12 contributes to the [4Fe-4S] cluster binding site. His41 and His74 together coordinate (2E)-4-hydroxy-3-methylbut-2-enyl diphosphate. Dimethylallyl diphosphate-binding residues include His41 and His74. Isopentenyl diphosphate contacts are provided by His41 and His74. Cys96 serves as a coordination point for [4Fe-4S] cluster. (2E)-4-hydroxy-3-methylbut-2-enyl diphosphate is bound at residue His124. His124 serves as a coordination point for dimethylallyl diphosphate. His124 contacts isopentenyl diphosphate. The Proton donor role is filled by Glu126. Residue Thr167 coordinates (2E)-4-hydroxy-3-methylbut-2-enyl diphosphate. Cys197 provides a ligand contact to [4Fe-4S] cluster. The (2E)-4-hydroxy-3-methylbut-2-enyl diphosphate site is built by Ser225, Ser226, Asn227, and Ser269. Positions 225, 226, 227, and 269 each coordinate dimethylallyl diphosphate. Residues Ser225, Ser226, Asn227, and Ser269 each coordinate isopentenyl diphosphate.

This sequence belongs to the IspH family. In terms of assembly, homodimer. Requires [4Fe-4S] cluster as cofactor.

It catalyses the reaction isopentenyl diphosphate + 2 oxidized [2Fe-2S]-[ferredoxin] + H2O = (2E)-4-hydroxy-3-methylbut-2-enyl diphosphate + 2 reduced [2Fe-2S]-[ferredoxin] + 2 H(+). The catalysed reaction is dimethylallyl diphosphate + 2 oxidized [2Fe-2S]-[ferredoxin] + H2O = (2E)-4-hydroxy-3-methylbut-2-enyl diphosphate + 2 reduced [2Fe-2S]-[ferredoxin] + 2 H(+). The protein operates within isoprenoid biosynthesis; dimethylallyl diphosphate biosynthesis; dimethylallyl diphosphate from (2E)-4-hydroxy-3-methylbutenyl diphosphate: step 1/1. It participates in isoprenoid biosynthesis; isopentenyl diphosphate biosynthesis via DXP pathway; isopentenyl diphosphate from 1-deoxy-D-xylulose 5-phosphate: step 6/6. Functionally, catalyzes the conversion of 1-hydroxy-2-methyl-2-(E)-butenyl 4-diphosphate (HMBPP) into a mixture of isopentenyl diphosphate (IPP) and dimethylallyl diphosphate (DMAPP). Acts in the terminal step of the DOXP/MEP pathway for isoprenoid precursor biosynthesis. The polypeptide is 4-hydroxy-3-methylbut-2-enyl diphosphate reductase (Buchnera aphidicola subsp. Schizaphis graminum (strain Sg)).